A 217-amino-acid chain; its full sequence is Cytochrome c biogenesis ATP-binding export protein CcmA (217 aa).

The ABC transporter domain maps to 16–214; that stretch reads LVLEQLSCER…AHGQAEVTEG (199 aa). 48–55 provides a ligand contact to ATP; that stretch reads GANGAGKT.

The protein belongs to the ABC transporter superfamily. CcmA exporter (TC 3.A.1.107) family. In terms of assembly, the complex is composed of two ATP-binding proteins (CcmA) and two transmembrane proteins (CcmB).

The protein localises to the cell inner membrane. It carries out the reaction heme b(in) + ATP + H2O = heme b(out) + ADP + phosphate + H(+). Its function is as follows. Part of the ABC transporter complex CcmAB involved in the biogenesis of c-type cytochromes; once thought to export heme, this seems not to be the case, but its exact role is uncertain. Responsible for energy coupling to the transport system. The polypeptide is Cytochrome c biogenesis ATP-binding export protein CcmA (Alcanivorax borkumensis (strain ATCC 700651 / DSM 11573 / NCIMB 13689 / SK2)).